The following is a 399-amino-acid chain: Enoyl-[acyl-carrier-protein] reductase [NADH] 2 (399 aa).

Residues 48–53, 75–76, 112–113, and 141–142 contribute to the NAD(+) site; these read GASSGF, FE, DA, and LA. Substrate is bound at residue tyrosine 227. The active-site Proton donor is the tyrosine 237. NAD(+)-binding positions include lysine 246 and 275 to 277; that span reads LVT.

It belongs to the TER reductase family. In terms of assembly, monomer.

It catalyses the reaction a 2,3-saturated acyl-[ACP] + NAD(+) = a (2E)-enoyl-[ACP] + NADH + H(+). Its pathway is lipid metabolism; fatty acid biosynthesis. In terms of biological role, involved in the final reduction of the elongation cycle of fatty acid synthesis (FAS II). Catalyzes the reduction of a carbon-carbon double bond in an enoyl moiety that is covalently linked to an acyl carrier protein (ACP). The sequence is that of Enoyl-[acyl-carrier-protein] reductase [NADH] 2 from Vibrio parahaemolyticus serotype O3:K6 (strain RIMD 2210633).